We begin with the raw amino-acid sequence, 122 residues long: Large ribosomal subunit protein uL14 (122 aa).

Belongs to the universal ribosomal protein uL14 family. As to quaternary structure, part of the 50S ribosomal subunit. Forms a cluster with proteins L3 and L19. In the 70S ribosome, L14 and L19 interact and together make contacts with the 16S rRNA in bridges B5 and B8.

Binds to 23S rRNA. Forms part of two intersubunit bridges in the 70S ribosome. This chain is Large ribosomal subunit protein uL14, found in Bordetella avium (strain 197N).